Here is a 423-residue protein sequence, read N- to C-terminus: D-tagatose-1,6-bisphosphate aldolase subunit GatZ (423 aa).

It belongs to the GatZ/KbaZ family. GatZ subfamily. In terms of assembly, forms a complex with GatY.

It participates in carbohydrate metabolism; D-tagatose 6-phosphate degradation; D-glyceraldehyde 3-phosphate and glycerone phosphate from D-tagatose 6-phosphate: step 2/2. Its function is as follows. Component of the tagatose-1,6-bisphosphate aldolase GatYZ that is required for full activity and stability of the Y subunit. Could have a chaperone-like function for the proper and stable folding of GatY. When expressed alone, GatZ does not show any aldolase activity. Is involved in the catabolism of galactitol. The polypeptide is D-tagatose-1,6-bisphosphate aldolase subunit GatZ (Salmonella paratyphi B (strain ATCC BAA-1250 / SPB7)).